Consider the following 1857-residue polypeptide: Phosphatidylinositol 3-kinase 2 (1857 aa).

Low complexity-rich tracts occupy residues 1-32 (MKMS…SNGS) and 42-55 (NLSV…SNNS). Disordered stretches follow at residues 1-61 (MKMS…KSST), 145-313 (TPLN…TNRV), 348-468 (SSSK…NSIR), 481-512 (ISSN…GERV), and 530-573 (ESDI…GPNV). The segment covering 145 to 155 (TPLNRSRSGSI) has biased composition (polar residues). The segment covering 162-269 (NNLTSSSSSS…NNNNNNNSNS (108 aa)) has biased composition (low complexity). Residues 270–281 (GGSSRMITSKSQ) show a composition bias toward polar residues. Low complexity-rich tracts occupy residues 288 to 311 (TSNT…TPTN) and 352 to 464 (LLIP…QPSN). Residues 533–560 (ISSSPRSIGSPNSIRASISSQLPPSLSS) are compositionally biased toward low complexity. Gly residues predominate over residues 561–570 (IGGGGGGGSG). The PI3K-RBD domain occupies 821–934 (PNKITIMVLL…NQTVELSLTN (114 aa)). Positions 996 to 1078 (KETNKENKDS…SGSGNGSEQP (83 aa)) are disordered. The span at 997 to 1011 (ETNKENKDSNKENKD) shows a compositional bias: basic and acidic residues. Residues 1012–1056 (SSSNNNNNNNNNNNNNNNNNNNNNNNNNNNGNNNGNNSNNNSNSN) show a composition bias toward low complexity. The C2 PI3K-type domain occupies 1099–1271 (VKRLFRVNIA…QPIILLVEFE (173 aa)). The PIK helical domain occupies 1326–1503 (PVGLKKLDLD…GLLLEGYLRS (178 aa)). Positions 1568 to 1845 (IIDKCRYMDS…NISVALNTKT (278 aa)) constitute a PI3K/PI4K catalytic domain. Residues 1574 to 1580 (YMDSKKL) form a G-loop region. A catalytic loop region spans residues 1711–1719 (GIGDRHSDN). The interval 1730–1756 (HIDFGHFLGNYKKKYGFKRERAPFIFT) is activation loop.

This sequence belongs to the PI3/PI4-kinase family.

It catalyses the reaction a 1,2-diacyl-sn-glycero-3-phospho-(1D-myo-inositol) + ATP = a 1,2-diacyl-sn-glycero-3-phospho-(1D-myo-inositol-3-phosphate) + ADP + H(+). The chain is Phosphatidylinositol 3-kinase 2 (pikB) from Dictyostelium discoideum (Social amoeba).